The sequence spans 411 residues: LL-diaminopimelate aminotransferase (411 aa).

Substrate is bound by residues Tyr15 and Gly42. Pyridoxal 5'-phosphate is bound by residues Tyr72, Ser108–Lys109, Tyr132, Asn187, Tyr218, and Ser246–Ser248. Lys109, Tyr132, and Asn187 together coordinate substrate. An N6-(pyridoxal phosphate)lysine modification is found at Lys249. Pyridoxal 5'-phosphate contacts are provided by Arg257 and Asn292. Substrate-binding residues include Asn292 and Arg388.

This sequence belongs to the class-I pyridoxal-phosphate-dependent aminotransferase family. LL-diaminopimelate aminotransferase subfamily. As to quaternary structure, homodimer. Pyridoxal 5'-phosphate is required as a cofactor.

The catalysed reaction is (2S,6S)-2,6-diaminopimelate + 2-oxoglutarate = (S)-2,3,4,5-tetrahydrodipicolinate + L-glutamate + H2O + H(+). It functions in the pathway amino-acid biosynthesis; L-lysine biosynthesis via DAP pathway; LL-2,6-diaminopimelate from (S)-tetrahydrodipicolinate (aminotransferase route): step 1/1. Functionally, involved in the synthesis of meso-diaminopimelate (m-DAP or DL-DAP), required for both lysine and peptidoglycan biosynthesis. Catalyzes the direct conversion of tetrahydrodipicolinate to LL-diaminopimelate. In Citrifermentans bemidjiense (strain ATCC BAA-1014 / DSM 16622 / JCM 12645 / Bem) (Geobacter bemidjiensis), this protein is LL-diaminopimelate aminotransferase.